The chain runs to 502 residues: MDIKAEEICAIIEQQIENFDREIEISEMGTIISVGDGIARIHGLNRAMAGELLEFPGDVIGMVLNLEEDNVGAAILGDTHHIKEGDSVRRTGRIVEVPVGEALIGRVVNGIGQPIDGGGALEGAEARQVEIKAPGIVTRKSVHQPVQTGLKAIDALVPIGRGQRELIIGDRQTGKTALAIDAIINQKGQDMVCIYVAIGQKQSTVAQVVDKLKQHGAMDYTIVVSAGASEPAPLQFIAPYAGVTMGEYFRDNGRHALIVYDDLSKHAVAYRQLSLLLRRPPGREAFPGDVFYLHSRLLERAAKLNDELGGGSLTALPIIETQAGDLSSYIPTNVISITDGQIFLEADLFYSGVRPAINVGLSVSRVGGSAQVKAMKQVAGTLRLSLAQYREMAAFAQFGSDLDAATQKQLARGARLVEILKQPQYQPLPVEKQILVIYAANNGYVDDYPLTVLRRYEEELYSFLEHRHGDLLKDLAEKKAIDTDLEARIKAVLAAFGEQFTP.

169 to 176 is an ATP binding site; that stretch reads GDRQTGKT.

It belongs to the ATPase alpha/beta chains family. F-type ATPases have 2 components, CF(1) - the catalytic core - and CF(0) - the membrane proton channel. CF(1) has five subunits: alpha(3), beta(3), gamma(1), delta(1), epsilon(1). CF(0) has three main subunits: a(1), b(2) and c(9-12). The alpha and beta chains form an alternating ring which encloses part of the gamma chain. CF(1) is attached to CF(0) by a central stalk formed by the gamma and epsilon chains, while a peripheral stalk is formed by the delta and b chains.

The protein localises to the cell inner membrane. It catalyses the reaction ATP + H2O + 4 H(+)(in) = ADP + phosphate + 5 H(+)(out). Produces ATP from ADP in the presence of a proton gradient across the membrane. The alpha chain is a regulatory subunit. The chain is ATP synthase subunit alpha 1/3 from Syntrophotalea carbinolica (strain DSM 2380 / NBRC 103641 / GraBd1) (Pelobacter carbinolicus).